Consider the following 259-residue polypeptide: Ribonuclease HII (259 aa).

The RNase H type-2 domain maps to 72-259; the sequence is ERIAGIDEAG…PVREALGVQS (188 aa). A divalent metal cation is bound by residues Asp78, Glu79, and Asp170.

It belongs to the RNase HII family. Requires Mn(2+) as cofactor. The cofactor is Mg(2+).

The protein localises to the cytoplasm. It carries out the reaction Endonucleolytic cleavage to 5'-phosphomonoester.. Endonuclease that specifically degrades the RNA of RNA-DNA hybrids. In Geobacillus thermodenitrificans (strain NG80-2), this protein is Ribonuclease HII.